A 675-amino-acid chain; its full sequence is Putative acyl-coenzyme A oxidase 3.2, peroxisomal (675 aa).

The N-terminal 34 residues, methionine 1 to cysteine 34, are a transit peptide targeting the peroxisome. Alanine 442–leucine 457 serves as a coordination point for FAD.

Belongs to the acyl-CoA oxidase family. Requires FAD as cofactor.

The protein resides in the peroxisome. It catalyses the reaction a 2,3-saturated acyl-CoA + O2 = a (2E)-enoyl-CoA + H2O2. Its function is as follows. Catalyzes the desaturation of acyl-CoAs to 2-trans-enoyl-CoAs. The chain is Putative acyl-coenzyme A oxidase 3.2, peroxisomal (ACX3.2) from Arabidopsis thaliana (Mouse-ear cress).